An 89-amino-acid chain; its full sequence is Putative defensin-like protein 89 (89 aa).

Residues 1-25 (MGFKNNLSLVSVMVFALILLPMISG) form the signal peptide. Cystine bridges form between C30-C66, C36-C57, C42-C64, and C46-C65.

This sequence belongs to the DEFL family.

Its subcellular location is the secreted. In Arabidopsis thaliana (Mouse-ear cress), this protein is Putative defensin-like protein 89.